The following is a 262-amino-acid chain: Phosphonates import ATP-binding protein PhnC (262 aa).

Residues 5–253 (IRVEKLAKTF…RFDHLYRSIN (249 aa)) form the ABC transporter domain. Position 37–44 (37–44 (GPSGSGKS)) interacts with ATP.

The protein belongs to the ABC transporter superfamily. Phosphonates importer (TC 3.A.1.9.1) family. The complex is composed of two ATP-binding proteins (PhnC), two transmembrane proteins (PhnE) and a solute-binding protein (PhnD).

The protein localises to the cell inner membrane. It catalyses the reaction phosphonate(out) + ATP + H2O = phosphonate(in) + ADP + phosphate + H(+). Functionally, part of the ABC transporter complex PhnCDE involved in phosphonates import. Responsible for energy coupling to the transport system. This Escherichia coli (strain UTI89 / UPEC) protein is Phosphonates import ATP-binding protein PhnC.